Here is a 429-residue protein sequence, read N- to C-terminus: 3-phosphoshikimate 1-carboxyvinyltransferase (429 aa).

Residues Lys11, Ser12, and Arg16 each coordinate 3-phosphoshikimate. Lys11 is a phosphoenolpyruvate binding site. 2 residues coordinate phosphoenolpyruvate: Gly82 and Arg110. 3-phosphoshikimate-binding residues include Ser155, Gln157, Asp302, and Lys329. Gln157 contacts phosphoenolpyruvate. The active-site Proton acceptor is the Asp302. Residues Arg333 and Arg385 each contribute to the phosphoenolpyruvate site.

The protein belongs to the EPSP synthase family. Monomer.

It localises to the cytoplasm. The enzyme catalyses 3-phosphoshikimate + phosphoenolpyruvate = 5-O-(1-carboxyvinyl)-3-phosphoshikimate + phosphate. The protein operates within metabolic intermediate biosynthesis; chorismate biosynthesis; chorismate from D-erythrose 4-phosphate and phosphoenolpyruvate: step 6/7. In terms of biological role, catalyzes the transfer of the enolpyruvyl moiety of phosphoenolpyruvate (PEP) to the 5-hydroxyl of shikimate-3-phosphate (S3P) to produce enolpyruvyl shikimate-3-phosphate and inorganic phosphate. The polypeptide is 3-phosphoshikimate 1-carboxyvinyltransferase (Helicobacter pylori (strain ATCC 700392 / 26695) (Campylobacter pylori)).